Reading from the N-terminus, the 221-residue chain is VQWHQIPGKLMHITATPHFLWGVNSNQQIYLCRQPCYDGQWTQISGSLKQVDADDHEVWGVNRNDDIYKRPVDGSGSWVRVSGKLKHVSASGYGYIWGVNSNDQIYKCPKPCNGAWTQVNGRLKQIDGGQSMVYGVNSANAIYRRPVDGSGSWQQISGSLKHITGSGLSEVFGVNSNDQIYRCTKPCSGQWSLIDGRLKQCDATGNTIVGVNSVDNIYRSG.

A run of 6 repeats spans residues 1–38 (VQWHQIPGKLMHITATPHFLWGVNSNQQIYLCRQPCYD), 39–75 (GQWTQISGSLKQVDADDHEVWGVNRNDDIYKRPVDGS), 76–113 (GSWVRVSGKLKHVSASGYGYIWGVNSNDQIYKCPKPCN), 114–150 (GAWTQVNGRLKQIDGGQSMVYGVNSANAIYRRPVDGS), 151–188 (GSWQQISGSLKHITGSGLSEVFGVNSNDQIYRCTKPCS), and 189–221 (GQWSLIDGRLKQCDATGNTIVGVNSVDNIYRSG). The segment at 1–221 (VQWHQIPGKL…NSVDNIYRSG (221 aa)) is 6 X approximate tandem repeats. Cys32 and Cys36 form a disulfide bridge. The cysteines at positions 108 and 112 are disulfide-linked. Cys183 and Cys187 are disulfide-bonded.

It belongs to the tectonin family. As to expression, hemocytes.

The protein localises to the cytoplasmic vesicle. It localises to the secretory vesicle. Functionally, lipopolysaccharide-binding protein with Gram-negative antibacterial activity. Binds zinc and calcium. The protein is Lectin L6 of Tachypleus tridentatus (Japanese horseshoe crab).